The following is a 452-amino-acid chain: Cell division protein FtsZ (452 aa).

Residues 24–28 (GAGSN), 111–113 (GTG), Glu142, Arg146, and Asp190 contribute to the GTP site. The segment at 432 to 452 (DQDNKESDIHDIPAFLRKKRD) is disordered. The segment covering 433–442 (QDNKESDIHD) has biased composition (basic and acidic residues).

The protein belongs to the FtsZ family. Homodimer. Polymerizes to form a dynamic ring structure in a strictly GTP-dependent manner. Interacts directly with several other division proteins.

The protein resides in the cytoplasm. Its function is as follows. Essential cell division protein that forms a contractile ring structure (Z ring) at the future cell division site. The regulation of the ring assembly controls the timing and the location of cell division. One of the functions of the FtsZ ring is to recruit other cell division proteins to the septum to produce a new cell wall between the dividing cells. Binds GTP and shows GTPase activity. The sequence is that of Cell division protein FtsZ from Rickettsia conorii (strain ATCC VR-613 / Malish 7).